Here is a 231-residue protein sequence, read N- to C-terminus: 7-cyano-7-deazaguanine synthase (231 aa).

8 to 18 (FSGGQDSTTCL) contacts ATP. Zn(2+) is bound by residues cysteine 188, cysteine 197, cysteine 200, and cysteine 203.

Belongs to the QueC family. The cofactor is Zn(2+).

It carries out the reaction 7-carboxy-7-deazaguanine + NH4(+) + ATP = 7-cyano-7-deazaguanine + ADP + phosphate + H2O + H(+). Its pathway is purine metabolism; 7-cyano-7-deazaguanine biosynthesis. Its function is as follows. Catalyzes the ATP-dependent conversion of 7-carboxy-7-deazaguanine (CDG) to 7-cyano-7-deazaguanine (preQ(0)). In Erwinia tasmaniensis (strain DSM 17950 / CFBP 7177 / CIP 109463 / NCPPB 4357 / Et1/99), this protein is 7-cyano-7-deazaguanine synthase.